A 383-amino-acid chain; its full sequence is tRNA(Met) cytidine acetate ligase (383 aa).

ATP contacts are provided by residues 7–20 (IAEF…HEFL), glycine 101, asparagine 153, and 178–179 (RI).

The protein belongs to the TmcAL family.

It localises to the cytoplasm. The catalysed reaction is cytidine(34) in elongator tRNA(Met) + acetate + ATP = N(4)-acetylcytidine(34) in elongator tRNA(Met) + AMP + diphosphate. Its function is as follows. Catalyzes the formation of N(4)-acetylcytidine (ac(4)C) at the wobble position of elongator tRNA(Met), using acetate and ATP as substrates. First activates an acetate ion to form acetyladenylate (Ac-AMP) and then transfers the acetyl group to tRNA to form ac(4)C34. In Lactobacillus helveticus (strain DPC 4571), this protein is tRNA(Met) cytidine acetate ligase.